The following is a 189-amino-acid chain: Ribosome maturation factor RimM (189 aa).

The PRC barrel domain maps to 118–189 (SGEYYWDDLI…IILVDWDENF (72 aa)).

Belongs to the RimM family. As to quaternary structure, binds ribosomal protein uS19.

Its subcellular location is the cytoplasm. Its function is as follows. An accessory protein needed during the final step in the assembly of 30S ribosomal subunit, possibly for assembly of the head region. Essential for efficient processing of 16S rRNA. May be needed both before and after RbfA during the maturation of 16S rRNA. It has affinity for free ribosomal 30S subunits but not for 70S ribosomes. This Ruthia magnifica subsp. Calyptogena magnifica protein is Ribosome maturation factor RimM.